Consider the following 194-residue polypeptide: ATP-dependent Clp protease proteolytic subunit (194 aa).

The active-site Nucleophile is S98. H123 is an active-site residue.

It belongs to the peptidase S14 family. Fourteen ClpP subunits assemble into 2 heptameric rings which stack back to back to give a disk-like structure with a central cavity, resembling the structure of eukaryotic proteasomes.

It is found in the cytoplasm. The catalysed reaction is Hydrolysis of proteins to small peptides in the presence of ATP and magnesium. alpha-casein is the usual test substrate. In the absence of ATP, only oligopeptides shorter than five residues are hydrolyzed (such as succinyl-Leu-Tyr-|-NHMec, and Leu-Tyr-Leu-|-Tyr-Trp, in which cleavage of the -Tyr-|-Leu- and -Tyr-|-Trp bonds also occurs).. Its function is as follows. Cleaves peptides in various proteins in a process that requires ATP hydrolysis. Has a chymotrypsin-like activity. Plays a major role in the degradation of misfolded proteins. This chain is ATP-dependent Clp protease proteolytic subunit, found in Syntrophus aciditrophicus (strain SB).